A 544-amino-acid polypeptide reads, in one-letter code: Zinc finger and BTB domain-containing protein 7B (544 aa).

One can recognise a BTB domain in the interval 34-115; sequence CDLTIRTQGL…AYTATLTTSS (82 aa). Serine 150 is subject to Phosphoserine. Disordered regions lie at residues 171–221 and 244–314; these read TTAS…ARAN and GRLG…EDPI. Over residues 186–200 the composition is skewed to pro residues; it reads PQVPLLPPPPPPPRP. Residues 201–210 show a composition bias toward basic residues; the sequence is VARRSRKPRK. N6-acetyllysine; by EP300; alternate occurs at positions 210 and 216. Glycyl lysine isopeptide (Lys-Gly) (interchain with G-Cter in ubiquitin); alternate cross-links involve residues lysine 210 and lysine 216. Positions 277–286 are enriched in acidic residues; sequence FEGEEEEEEM. Lysine 339 carries the N6-acetyllysine; by EP300; alternate modification. Lysine 339 participates in a covalent cross-link: Glycyl lysine isopeptide (Lys-Gly) (interchain with G-Cter in ubiquitin); alternate. The segment at 348-404 is required for interaction with and acetylation by EP300; that stretch reads MPQECPVCHKIIHGAGKLPRHMRTHTGEKPFACEVCGVRFTRNDKLKIHMRKHTGER. Residues 350–372 form a C2H2-type 1 zinc finger; it reads QECPVCHKIIHGAGKLPRHMRTH. Threonine 373 is modified (phosphothreonine). C2H2-type zinc fingers lie at residues 378–400 and 406–428; these read FACEVCGVRFTRNDKLKIHMRKH and YSCPHCPARFLHSYDLKNHMHLH. The segment at 434-458 adopts a C2H2-type 4; atypical zinc-finger fold; the sequence is YECHLCHKAFAKEDHLQRHLKGQNC. Disordered regions lie at residues 465 to 493 and 507 to 544; these read RRRKDDVAAPHYPPPSTTTSSPAGLDLSN and WEQSATTGPPVTTQGPPEEEEEEGTPTTPQAEGAMESS. Low complexity-rich tracts occupy residues 511 to 522 and 531 to 544; these read ATTGPPVTTQGP and TPTTPQAEGAMESS.

Homodimerizes. Interacts with NCL, NEDD4 and YBX1. Interacts with HNRNPU (via RNA-binding RGG-box region); the interaction facilitates the recruitment of long non-coding RNA Blnc1 by ZBTB7B. Interacts with HDAC4 and HDAC5; the interaction allows the recruitment of HDAC4 and HDAC5 on CD8 loci for deacetylation and possible inhibition of CD8 genes expression. In terms of processing, acetylated directly and specifically by EP300. EP300-mediated acetylation of Lys-210, Lys-216 and Lys-339 stabilizes the protein by antagonizing ubiquitin conjugation. Ubiquitinated, leading to proteasomal degradation. Competes with acetylation on Lys-210, Lys-216 and Lys-339. Widely expressed, with a higher level in skin. Expressed in thymus. Restricted to CD4 cells (mature single positive CD4(+) and intermediate CD4(+)CD8(+) cells). Expressed in the luminal epithelial cells in the mammary glands where is up-regulated at late pregnancy and lactation. Expression is enriched in brown fat.

It localises to the nucleus. Functionally, transcription regulator that acts as a key regulator of lineage commitment of immature T-cell precursors. Exerts distinct biological functions in the mammary epithelial cells and T cells in a tissue-specific manner. Necessary and sufficient for commitment of CD4 lineage, while its absence causes CD8 commitment. Development of immature T-cell precursors (thymocytes) to either the CD4 helper or CD8 killer T-cell lineages correlates precisely with their T-cell receptor specificity for major histocompatibility complex class II or class I molecules, respectively. Cross-antagonism between ZBTB7B and CBF complexes are determinative to CD4 versus CD8 cell fate decision. Suppresses RUNX3 expression and imposes CD4+ lineage fate by inducing the SOCS suppressors of cytokine signaling. induces, as a transcriptional activator, SOCS genes expression which represses RUNX3 expression and promotes the CD4+ lineage fate. During CD4 lineage commitment, associates with multiple sites at the CD8 locus, acting as a negative regulator of the CD8 promoter and enhancers by epigenetic silencing through the recruitment of class II histone deacetylases, such as HDAC4 and HDAC5, to these loci. Regulates the development of IL17-producing CD1d-restricted naural killer (NK) T cells. Also functions as an important metabolic regulator in the lactating mammary glands. Critical feed-forward regulator of insulin signaling in mammary gland lactation, directly regulates expression of insulin receptor substrate-1 (IRS-1) and insulin-induced Akt-mTOR-SREBP signaling. Transcriptional repressor of the collagen COL1A1 and COL1A2 genes. May also function as a repressor of fibronectin and possibly other extracellular matrix genes. Potent driver of brown fat development, thermogenesis and cold-induced beige fat formation. Recruits the brown fat lncRNA 1 (Blnc1):HNRNPU ribonucleoprotein complex to activate thermogenic gene expression in brown and beige adipocytes. The sequence is that of Zinc finger and BTB domain-containing protein 7B from Mus musculus (Mouse).